A 1306-amino-acid chain; its full sequence is Contactin-associated protein-like 5 (1306 aa).

An N-terminal signal peptide occupies residues 1 to 24; the sequence is MDSLPRLTSVLTLLFSGLWHLGLT. Topologically, residues 25-1237 are extracellular; sequence ATNYNCDDPL…PLTNAVRSDS (1213 aa). The region spanning 30 to 174 is the F5/8 type C domain; the sequence is CDDPLASLLS…IGMRVEVYGC (145 aa). A disulfide bridge links cysteine 30 with cysteine 174. Laminin G-like domains lie at 180-360 and 367-544; these read VADF…TFSC and PITF…IDLC. N-linked (GlcNAc...) asparagine glycosylation is found at asparagine 282, asparagine 355, and asparagine 496. Cysteine 329 and cysteine 360 are joined by a disulfide. 3 cysteine pairs are disulfide-bonded: cysteine 512–cysteine 544, cysteine 550–cysteine 561, and cysteine 555–cysteine 570. One can recognise an EGF-like 1 domain in the interval 546-583; sequence IKDRCLPNYCEHGGSCSQSWTTFYCNCSDTSYTGATCH. An N-linked (GlcNAc...) asparagine glycan is attached at asparagine 571. An intrachain disulfide couples cysteine 572 to cysteine 582. The Fibrinogen C-terminal domain occupies 584-790; that stretch reads NSIYEQSCEV…LRCYGDRRFW (207 aa). An N-linked (GlcNAc...) asparagine glycan is attached at asparagine 622. Positions 791-956 constitute a Laminin G-like 3 domain; sequence NAVSFYTEAS…KVTSGVRPGC (166 aa). Disulfide bonds link cysteine 929-cysteine 956, cysteine 960-cysteine 973, cysteine 967-cysteine 982, cysteine 984-cysteine 994, and cysteine 1164-cysteine 1199. In terms of domain architecture, EGF-like 2 spans 957–995; it reads PGHCSSYGSICHNGGKCVEKHNGYLCDCTNSPYEGPFCK. Residues 1013–1199 form the Laminin G-like 4 domain; that stretch reads QEPYPVTKNI…VHGTLTESSC (187 aa). The chain crosses the membrane as a helical span at residues 1238-1258; the sequence is AVIGGVIAVVIFIIFCIIGIM. At 1259–1306 the chain is on the cytoplasmic side; the sequence is TRFLYQHKQSHRTSQMKEKEYPENLDSSFRNEIDLQNTVSECKREYFI.

The protein belongs to the neurexin family.

Its subcellular location is the membrane. May play a role in the correct development and proper functioning of the peripheral and central nervous system and be involved in cell adhesion and intercellular communication. This chain is Contactin-associated protein-like 5 (CNTNAP5), found in Homo sapiens (Human).